The primary structure comprises 125 residues: Mesotocin-neurophysin MT (125 aa).

Positions 1–19 are cleaved as a signal peptide; the sequence is MSYTALAVTFFGWLALSSA. Cys20 and Cys25 are joined by a disulfide. The residue at position 28 (Gly28) is a Glycine amide. 7 cysteine pairs are disulfide-bonded: Cys42/Cys86, Cys45/Cys59, Cys53/Cys76, Cys60/Cys66, Cys93/Cys106, Cys100/Cys118, and Cys107/Cys112.

The protein belongs to the vasopressin/oxytocin family. As to expression, mesotocin is produced by magnocellular preoptic neurons in the hypothalamus in amphibians, reptiles and birds.

Its subcellular location is the secreted. Mesotocin is a diuretic hormone. This chain is Mesotocin-neurophysin MT, found in Bufo japonicus (Japanese common toad).